The primary structure comprises 351 residues: Dihydroorotate dehydrogenase (quinone) (351 aa).

FMN contacts are provided by residues 61-65 (AGLDK) and Thr-85. Residue Lys-65 participates in substrate binding. Residue 110–114 (NRMGF) coordinates substrate. Asn-139 and Asn-172 together coordinate FMN. Position 172 (Asn-172) interacts with substrate. Catalysis depends on Ser-175, which acts as the Nucleophile. A substrate-binding site is contributed by Asn-177. Positions 217 and 245 each coordinate FMN. 246-247 (NT) serves as a coordination point for substrate. FMN contacts are provided by residues Gly-268, Gly-297, and 318–319 (YT).

The protein belongs to the dihydroorotate dehydrogenase family. Type 2 subfamily. In terms of assembly, monomer. FMN is required as a cofactor.

It localises to the cell membrane. The enzyme catalyses (S)-dihydroorotate + a quinone = orotate + a quinol. It participates in pyrimidine metabolism; UMP biosynthesis via de novo pathway; orotate from (S)-dihydroorotate (quinone route): step 1/1. Catalyzes the conversion of dihydroorotate to orotate with quinone as electron acceptor. In Xylella fastidiosa (strain M12), this protein is Dihydroorotate dehydrogenase (quinone).